Here is a 1157-residue protein sequence, read N- to C-terminus: Hephaestin (1157 aa).

A signal peptide spans 1 to 18 (MKAGHLLWALLLMHSLWS). The Extracellular portion of the chain corresponds to 19–1109 (IPTDGAIRNY…PIKDVEILSS (1091 aa)). 6 consecutive Plastocyanin-like domains span residues 24–206 (AIRN…LITC), 218–366 (QRKD…VDSC), 370–559 (PPVD…LLVC), 569–717 (KQKG…VSQC), 730–902 (ASRV…LVIC), and 910–1066 (NGGR…SHEE). 2 N-linked (GlcNAc...) asparagine glycosylation sites follow: N49 and N54. Na(+) contacts are provided by G70 and Y73. Positions 126 and 128 each coordinate Cu(2+). H126 contributes to the O2 binding site. Ca(2+) is bound by residues K134, D152, and D153. N164 carries an N-linked (GlcNAc...) asparagine glycan. C180 and C206 form a disulfide bridge. Cu(2+)-binding residues include H186 and H188. Position 186 (H186) interacts with O2. The N-linked (GlcNAc...) asparagine glycan is linked to N236. S265 provides a ligand contact to Na(+). C285 and C366 form a disulfide bridge. H304, C347, and H352 together coordinate Cu(2+). Na(+) contacts are provided by Y416, G425, and Y428. A disulfide bridge links C533 with C559. N587 carries N-linked (GlcNAc...) asparagine glycosylation. Position 616 (S616) interacts with Na(+). Residues C636 and C717 are joined by a disulfide bond. Residues H655, C698, H703, and M708 each contribute to the Cu(2+) site. N713 and N757 each carry an N-linked (GlcNAc...) asparagine glycan. F768 and G777 together coordinate Na(+). The cysteines at positions 876 and 902 are disulfide-linked. N930 carries N-linked (GlcNAc...) asparagine glycosylation. Cu(2+)-binding residues include H999, H1002, H1004, H1044, C1045, H1046, H1050, and M1055. Positions 1002 and 1004 each coordinate O2. H1046 is an O2 binding site. Residues 1110-1130 (ALIAICVLLLLIALALGGVVW) form a helical membrane-spanning segment. Residues 1131 to 1157 (YQHRQRKLRRNRRSILDDSFKLLSLKQ) are Cytoplasmic-facing. S1144, S1149, and S1154 each carry phosphoserine.

Belongs to the multicopper oxidase family. In terms of assembly, part of a complex composed of SLC40A1/ferroportin, TF/transferrin and HEPH/hephaestin that transfers iron from cells to transferrin. The cofactor is Cu cation.

The protein localises to the basolateral cell membrane. The enzyme catalyses 4 Fe(2+) + O2 + 4 H(+) = 4 Fe(3+) + 2 H2O. Its function is as follows. Plasma membrane ferroxidase that mediates the extracellular conversion of ferrous/Fe(2+) iron into its ferric/Fe(3+) form. Couples ferroportin which specifically exports ferrous/Fe(2+) iron from cells to transferrin that only binds and shuttles extracellular ferric/Fe(3+) iron throughout the body. By helping iron transfer from cells to blood mainly contributes to dietary iron absorption by the intestinal epithelium and more generally regulates iron levels in the body. The protein is Hephaestin of Mus musculus (Mouse).